Reading from the N-terminus, the 137-residue chain is ATP synthase epsilon chain (137 aa).

This sequence belongs to the ATPase epsilon chain family. In terms of assembly, F-type ATPases have 2 components, CF(1) - the catalytic core - and CF(0) - the membrane proton channel. CF(1) has five subunits: alpha(3), beta(3), gamma(1), delta(1), epsilon(1). CF(0) has three main subunits: a, b and c.

Its subcellular location is the cellular thylakoid membrane. Its function is as follows. Produces ATP from ADP in the presence of a proton gradient across the membrane. In Synechococcus elongatus (strain ATCC 33912 / PCC 7942 / FACHB-805) (Anacystis nidulans R2), this protein is ATP synthase epsilon chain (atpC).